The following is a 354-amino-acid chain: Dihydroorotate dehydrogenase (quinone) (354 aa).

FMN is bound by residues 61–65 (AGYDK) and A85. Substrate is bound at residue K65. 110–114 (NRFGF) is a substrate binding site. Positions 139 and 170 each coordinate FMN. N170 is a substrate binding site. Residue S173 is the Nucleophile of the active site. Position 175 (N175) interacts with substrate. FMN-binding residues include K211 and T239. 240 to 241 (NT) serves as a coordination point for substrate. FMN is bound by residues G261, G290, and 311-312 (YT).

It belongs to the dihydroorotate dehydrogenase family. Type 2 subfamily. In terms of assembly, monomer. The cofactor is FMN.

The protein resides in the cell membrane. It carries out the reaction (S)-dihydroorotate + a quinone = orotate + a quinol. The protein operates within pyrimidine metabolism; UMP biosynthesis via de novo pathway; orotate from (S)-dihydroorotate (quinone route): step 1/1. Its function is as follows. Catalyzes the conversion of dihydroorotate to orotate with quinone as electron acceptor. The protein is Dihydroorotate dehydrogenase (quinone) of Cereibacter sphaeroides (strain ATCC 17023 / DSM 158 / JCM 6121 / CCUG 31486 / LMG 2827 / NBRC 12203 / NCIMB 8253 / ATH 2.4.1.) (Rhodobacter sphaeroides).